We begin with the raw amino-acid sequence, 414 residues long: uncharacterized protein (414 aa).

The helical transmembrane segment at 367-384 (TTWALTLICIACILLFFV) threads the bilayer.

It is found in the virion membrane. This is an uncharacterized protein from Human cytomegalovirus (strain Merlin) (HHV-5).